Consider the following 449-residue polypeptide: Probable magnetosome protein Mms48 (449 aa).

An N-terminal signal peptide occupies residues 1 to 18 (MLLRLIVLLIFMSPVVFA). Residues 40-60 (SNMPVLLAVILVVFLIFSALS) traverse the membrane as a helical segment. Residues 323–356 (PDGHLAAGEAAFAVQKWGVARRHIMAALKIAPDA) form a TPR repeat.

Its subcellular location is the magnetosome membrane. Its function is as follows. Overexpression in wild-type cells increases the number of cells with double magnetosome chains significantly. The 4 genes of this operon collectively influence magnetosome size and number. The sequence is that of Probable magnetosome protein Mms48 from Magnetospirillum gryphiswaldense (strain DSM 6361 / JCM 21280 / NBRC 15271 / MSR-1).